The following is a 128-amino-acid chain: Large ribosomal subunit protein bL19 (128 aa).

It belongs to the bacterial ribosomal protein bL19 family.

In terms of biological role, this protein is located at the 30S-50S ribosomal subunit interface and may play a role in the structure and function of the aminoacyl-tRNA binding site. In Herminiimonas arsenicoxydans, this protein is Large ribosomal subunit protein bL19.